Reading from the N-terminus, the 402-residue chain is S-adenosylmethionine synthase (402 aa).

Residue His15 participates in ATP binding. Position 17 (Asp17) interacts with Mg(2+). Glu43 is a binding site for K(+). L-methionine is bound by residues Glu56 and Gln99. A flexible loop region spans residues Gln99–Thr109. Residues Asp174–Lys176, Arg247–Phe248, Asp256, Arg262–Lys263, Ala279, and Lys283 contribute to the ATP site. Asp256 contributes to the L-methionine binding site. L-methionine is bound at residue Lys287.

It belongs to the AdoMet synthase family. Homotetramer; dimer of dimers. Requires Mg(2+) as cofactor. K(+) is required as a cofactor.

It localises to the cytoplasm. The enzyme catalyses L-methionine + ATP + H2O = S-adenosyl-L-methionine + phosphate + diphosphate. It participates in amino-acid biosynthesis; S-adenosyl-L-methionine biosynthesis; S-adenosyl-L-methionine from L-methionine: step 1/1. Functionally, catalyzes the formation of S-adenosylmethionine (AdoMet) from methionine and ATP. The overall synthetic reaction is composed of two sequential steps, AdoMet formation and the subsequent tripolyphosphate hydrolysis which occurs prior to release of AdoMet from the enzyme. This is S-adenosylmethionine synthase from Streptomyces griseus subsp. griseus (strain JCM 4626 / CBS 651.72 / NBRC 13350 / KCC S-0626 / ISP 5235).